The sequence spans 160 residues: Transcription elongation factor GreA (160 aa).

Residues 50–70 are a coiled coil; it reads AAREQQSFNEGRIQELEAKLS.

The protein belongs to the GreA/GreB family.

Necessary for efficient RNA polymerase transcription elongation past template-encoded arresting sites. The arresting sites in DNA have the property of trapping a certain fraction of elongating RNA polymerases that pass through, resulting in locked ternary complexes. Cleavage of the nascent transcript by cleavage factors such as GreA or GreB allows the resumption of elongation from the new 3'terminus. GreA releases sequences of 2 to 3 nucleotides. The polypeptide is Transcription elongation factor GreA (Legionella pneumophila (strain Corby)).